Reading from the N-terminus, the 407-residue chain is Membrane protein MosC (407 aa).

The interval 1-24 is disordered; that stretch reads MTRTSPRHHAPSETKRRVPMGGVH. A run of 11 helical transmembrane segments spans residues 31–51, 69–89, 109–129, 157–177, 186–206, 225–245, 255–275, 290–310, 316–336, 347–367, and 377–397; these read LTIT…AAWA, GVLL…AGYF, ALVL…IVLF, AFLH…FGVI, SVTL…HLLD, LLMF…IAEW, QVTD…MIAG, ALIA…LFMP, LAGF…IFSE, VGLT…PPII, and GRAL…SVFF.

It is found in the cell membrane. Its function is as follows. May be a membrane transport protein that could either transport a precursor for rhizopine biosynthesis into bacteroids or the finished product from the bacteroids. The polypeptide is Membrane protein MosC (mosC) (Rhizobium meliloti (Ensifer meliloti)).